We begin with the raw amino-acid sequence, 174 residues long: FAD synthase (174 aa).

Residues 34 to 35 (TF), 39 to 42 (HPGH), Asp119, and Tyr147 each bind ATP.

This sequence belongs to the archaeal FAD synthase family. As to quaternary structure, homodimer. Requires a divalent metal cation as cofactor.

It catalyses the reaction FMN + ATP + H(+) = FAD + diphosphate. The protein operates within cofactor biosynthesis; FAD biosynthesis; FAD from FMN: step 1/1. Functionally, catalyzes the transfer of the AMP portion of ATP to flavin mononucleotide (FMN) to produce flavin adenine dinucleotide (FAD) coenzyme. The chain is FAD synthase from Methanococcus voltae (strain ATCC BAA-1334 / A3).